A 554-amino-acid chain; its full sequence is Acurin A biosynthesis cluster MFS-type transporter (554 aa).

5 consecutive transmembrane segments (helical) span residues 24–44, 60–80, 96–116, 123–143, and 151–171; these read WLIF…TSII, LYIW…AIVG, LLIF…GMLL, GLGG…MVSL, and GILG…GGGF. Residue Asn174 is glycosylated (N-linked (GlcNAc...) asparagine). The next 3 helical transmembrane spans lie at 179-199, 219-239, and 251-271; these read WIFY…VTLL, WGGI…LTWA, and IVPL…EALP. Asn283 is a glycosylation site (N-linked (GlcNAc...) asparagine). 6 helical membrane-spanning segments follow: residues 289-309, 324-344, 352-372, 385-405, 417-437, and 496-516; these read LFVM…FLPI, VMLF…GILM, SFQY…TLLD, ILFG…ILAS, TWIF…AAVF, and VWQV…LVKA.

This sequence belongs to the major facilitator superfamily.

It localises to the membrane. Its function is as follows. MFS-type transporter that may have a role in the biosynthesis of acurin A, a highly reduced polyketide coupled to a serine via a peptide bond; either in extra- or intracellular transport. In Aspergillus aculeatus (strain ATCC 16872 / CBS 172.66 / WB 5094), this protein is Acurin A biosynthesis cluster MFS-type transporter.